A 362-amino-acid polypeptide reads, in one-letter code: Protein RecA (362 aa).

77–84 (GPESSGKT) is an ATP binding site.

The protein belongs to the RecA family.

The protein localises to the cytoplasm. Can catalyze the hydrolysis of ATP in the presence of single-stranded DNA, the ATP-dependent uptake of single-stranded DNA by duplex DNA, and the ATP-dependent hybridization of homologous single-stranded DNAs. It interacts with LexA causing its activation and leading to its autocatalytic cleavage. This Rhizobium etli (strain CIAT 652) protein is Protein RecA.